Reading from the N-terminus, the 251-residue chain is Triosephosphate isomerase (251 aa).

A substrate-binding site is contributed by 9–11 (NWK). His-96 serves as the catalytic Electrophile. The Proton acceptor role is filled by Glu-168. Substrate contacts are provided by residues Gly-174, Ser-214, and 235–236 (GG).

The protein belongs to the triosephosphate isomerase family. As to quaternary structure, homodimer.

It localises to the cytoplasm. It catalyses the reaction D-glyceraldehyde 3-phosphate = dihydroxyacetone phosphate. It functions in the pathway carbohydrate biosynthesis; gluconeogenesis. Its pathway is carbohydrate degradation; glycolysis; D-glyceraldehyde 3-phosphate from glycerone phosphate: step 1/1. In terms of biological role, involved in the gluconeogenesis. Catalyzes stereospecifically the conversion of dihydroxyacetone phosphate (DHAP) to D-glyceraldehyde-3-phosphate (G3P). The chain is Triosephosphate isomerase from Cytophaga hutchinsonii (strain ATCC 33406 / DSM 1761 / CIP 103989 / NBRC 15051 / NCIMB 9469 / D465).